The following is a 304-amino-acid chain: MWFKNLQLYRLPTPWNIDLAKFDEQLSRGPFVKCPSNQPMSRGWVSPRRDGALVYSLGQQWMIALSVEQRLLPSSVVNEEVKERAELMEAQQGYAPGRKQLKELRERVTEELMPRAFTRRRTTYVWLDPKNGWFCVDAGSPAKAEEVIEHLRHCLDDFPLTMLHTQVSPQAAMADWLAGGDAPAGFTIDRDCELKAAGEEKAAVRYVRHPLGDEISGEIKAHLASGKMPTKLALTWDDRISFVLGEKMEIKRLAFLDLLKEEAEKSAEHADEQFDADFALMTGELSRFLPQLVEALGGEVVEAK.

It belongs to the RdgC family.

The protein resides in the cytoplasm. The protein localises to the nucleoid. In terms of biological role, may be involved in recombination. In Dechloromonas aromatica (strain RCB), this protein is Recombination-associated protein RdgC.